The sequence spans 390 residues: Serpin B4 (390 aa).

An N-acetylmethionine modification is found at Met-1.

The protein belongs to the serpin family. Ov-serpin subfamily. In terms of tissue distribution, squamous cells.

It localises to the cytoplasm. In terms of biological role, may act as a protease inhibitor to modulate the host immune response against tumor cells. The chain is Serpin B4 (SERPINB4) from Homo sapiens (Human).